A 435-amino-acid polypeptide reads, in one-letter code: MLDSKLLRTELDETAAKLARRGFKLDVETIGKLEEQRKSIQVEVENLQSTRNSISKQIGQLMSAGDKEGAEKIKQQIGSLGSDLDVKKIELDAVMAQLDDIILSVPNIPADEVPNGKDENDNLEISRWGEPKSYDFELKDHVDLGEMGDGLDFASAVKITGARFIVMKGQFARLHRAIAQFMLDLHTEEHGYTEMYVPYLVNADSLFGTGQLPKFGKDLFHTEPLTEKASDEEPRKLSLIPTAEVPVTNLVRDTISDEADLPLKMTAHTPCFRSEAGSYGRDTRGLIRMHQFDKVELVQITKPEDSMNALEELTGHAEKVLQLLELPYRKVLLCTGDMGFGSHKTYDLEVWVPAQNTYREISSCSNMWDFQARRMQARFRRKGEKKPELVHTLNGSGLAVGRTMVAILENNQEADGRIAIPTVLQKYMGGATHIG.

Residue 242–244 (TAE) participates in L-serine binding. 273–275 (RSE) serves as a coordination point for ATP. E296 contacts L-serine. 360 to 363 (EISS) provides a ligand contact to ATP. S396 contacts L-serine.

The protein belongs to the class-II aminoacyl-tRNA synthetase family. Type-1 seryl-tRNA synthetase subfamily. As to quaternary structure, homodimer. The tRNA molecule binds across the dimer.

Its subcellular location is the cytoplasm. It carries out the reaction tRNA(Ser) + L-serine + ATP = L-seryl-tRNA(Ser) + AMP + diphosphate + H(+). The catalysed reaction is tRNA(Sec) + L-serine + ATP = L-seryl-tRNA(Sec) + AMP + diphosphate + H(+). Its pathway is aminoacyl-tRNA biosynthesis; selenocysteinyl-tRNA(Sec) biosynthesis; L-seryl-tRNA(Sec) from L-serine and tRNA(Sec): step 1/1. Functionally, catalyzes the attachment of serine to tRNA(Ser). Is also able to aminoacylate tRNA(Sec) with serine, to form the misacylated tRNA L-seryl-tRNA(Sec), which will be further converted into selenocysteinyl-tRNA(Sec). This chain is Serine--tRNA ligase, found in Vibrio vulnificus (strain YJ016).